Reading from the N-terminus, the 299-residue chain is Leucine zipper transcription factor-like protein 1 (299 aa).

The stretch at 96 to 296 (LKLQTDISEL…DLRKRLAQYE (201 aa)) forms a coiled coil. Residues 145-299 (GTAELLNKEI…KRLAQYEPED (155 aa)) are interaction with BSS9.

This sequence belongs to the LZTFL1 family. As to quaternary structure, self-associates. Interacts with BBS9; the interaction mediates the association of LZTL1 with the BBsome complex and regulates BBSome ciliary trafficking. In terms of tissue distribution, expressed in prostate, ovary, stomach, pancreas, esophagus, breast, liver, bladder, kidney, thyroid, colon and lung (at protein level). Down-regulated in multiple primary tumors (at protein level). Detected in testis, heart, skeletal muscle, thymus, spleen, small intestine, and peripheral blood leukocytes.

It localises to the cytoplasm. Functionally, regulates ciliary localization of the BBSome complex. Together with the BBSome complex, controls SMO ciliary trafficking and contributes to the sonic hedgehog (SHH) pathway regulation. May play a role in neurite outgrowth. May have tumor suppressor function. This Homo sapiens (Human) protein is Leucine zipper transcription factor-like protein 1 (LZTFL1).